The primary structure comprises 500 residues: NAD(P)H-quinone oxidoreductase chain 4, chloroplastic (500 aa).

The next 14 helical transmembrane spans lie at 4–24, 35–55, 87–107, 113–130, 134–154, 167–187, 208–228, 242–262, 272–292, 305–325, 330–350, 386–406, 416–436, and 462–482; these read FPWL…IFFL, YTIC…CYHF, IGPI…AWPV, LFHF…GLFS, LLLF…LLAM, FILY…GVAL, VLEI…SPII, HYST…YGLI, AHSI…IYAA, IAYS…SLTD, GALL…FLAG, LALP…GIIT, LLIT…SLSM, and LFLS…PDFV.

The protein belongs to the complex I subunit 4 family.

The protein resides in the plastid. Its subcellular location is the chloroplast thylakoid membrane. It carries out the reaction a plastoquinone + NADH + (n+1) H(+)(in) = a plastoquinol + NAD(+) + n H(+)(out). The enzyme catalyses a plastoquinone + NADPH + (n+1) H(+)(in) = a plastoquinol + NADP(+) + n H(+)(out). This chain is NAD(P)H-quinone oxidoreductase chain 4, chloroplastic, found in Solanum lycopersicum (Tomato).